We begin with the raw amino-acid sequence, 256 residues long: GTP cyclohydrolase FolE2 (256 aa).

Belongs to the GTP cyclohydrolase IV family.

It catalyses the reaction GTP + H2O = 7,8-dihydroneopterin 3'-triphosphate + formate + H(+). The protein operates within cofactor biosynthesis; 7,8-dihydroneopterin triphosphate biosynthesis; 7,8-dihydroneopterin triphosphate from GTP: step 1/1. Functionally, converts GTP to 7,8-dihydroneopterin triphosphate. In Maridesulfovibrio salexigens (strain ATCC 14822 / DSM 2638 / NCIMB 8403 / VKM B-1763) (Desulfovibrio salexigens), this protein is GTP cyclohydrolase FolE2.